Here is a 261-residue protein sequence, read N- to C-terminus: 5'-nucleotidase SurE (261 aa).

Residues Asp-8, Asp-9, Ser-40, and Asn-94 each contribute to the a divalent metal cation site.

The protein belongs to the SurE nucleotidase family. It depends on a divalent metal cation as a cofactor.

The protein localises to the cytoplasm. It carries out the reaction a ribonucleoside 5'-phosphate + H2O = a ribonucleoside + phosphate. Nucleotidase that shows phosphatase activity on nucleoside 5'-monophosphates. This Anaplasma marginale (strain Florida) protein is 5'-nucleotidase SurE.